The primary structure comprises 1392 residues: DNA-directed RNA polymerase subunit beta'' (1392 aa).

4 residues coordinate Zn(2+): Cys224, Cys295, Cys302, and Cys305.

It belongs to the RNA polymerase beta' chain family. RpoC2 subfamily. As to quaternary structure, in plastids the minimal PEP RNA polymerase catalytic core is composed of four subunits: alpha, beta, beta', and beta''. When a (nuclear-encoded) sigma factor is associated with the core the holoenzyme is formed, which can initiate transcription. It depends on Zn(2+) as a cofactor.

Its subcellular location is the plastid. The protein localises to the chloroplast. It catalyses the reaction RNA(n) + a ribonucleoside 5'-triphosphate = RNA(n+1) + diphosphate. Its function is as follows. DNA-dependent RNA polymerase catalyzes the transcription of DNA into RNA using the four ribonucleoside triphosphates as substrates. This Solanum tuberosum (Potato) protein is DNA-directed RNA polymerase subunit beta''.